The following is a 1140-amino-acid chain: Eukaryotic translation initiation factor 3 subunit A (1140 aa).

In terms of domain architecture, PCI spans 319 to 502; it reads LQRMAAHVLL…NSIYFGTDLT (184 aa). Basic and acidic residues-rich tracts occupy residues 589 to 624, 830 to 900, and 921 to 984; these read QNNAREEEEARRQEEESRKAKLAEQKRLEQEQEERE, AAEE…RGGD, and ERND…EPDS. Disordered stretches follow at residues 589–632 and 830–1140; these read QNNA…QNEI and AAEE…VKRR. A compositionally biased stretch (low complexity) spans 987–998; the sequence is AAGAKDAGGAPA. Composition is skewed to basic and acidic residues over residues 999 to 1050, 1058 to 1086, and 1109 to 1130; these read SRDD…EPQR, DAPRQSDRDNRRPGGERRDRDGRDVRGDQ, and PRDEKPAAKRDQPQDKENKGGD.

It belongs to the eIF-3 subunit A family. In terms of assembly, component of the eukaryotic translation initiation factor 3 (eIF-3) complex. The eIF-3 complex interacts with pix.

It localises to the cytoplasm. In terms of biological role, RNA-binding component of the eukaryotic translation initiation factor 3 (eIF-3) complex, which is involved in protein synthesis of a specialized repertoire of mRNAs and, together with other initiation factors, stimulates binding of mRNA and methionyl-tRNAi to the 40S ribosome. The eIF-3 complex specifically targets and initiates translation of a subset of mRNAs involved in cell proliferation. The protein is Eukaryotic translation initiation factor 3 subunit A of Drosophila ananassae (Fruit fly).